A 342-amino-acid chain; its full sequence is tRNA N6-adenosine threonylcarbamoyltransferase (342 aa).

Residues histidine 114 and histidine 118 each contribute to the Fe cation site. Substrate is bound by residues 136–140 (LVSGG), aspartate 169, glycine 182, aspartate 186, and asparagine 275. Aspartate 301 serves as a coordination point for Fe cation.

This sequence belongs to the KAE1 / TsaD family. Requires Fe(2+) as cofactor.

It localises to the cytoplasm. The enzyme catalyses L-threonylcarbamoyladenylate + adenosine(37) in tRNA = N(6)-L-threonylcarbamoyladenosine(37) in tRNA + AMP + H(+). In terms of biological role, required for the formation of a threonylcarbamoyl group on adenosine at position 37 (t(6)A37) in tRNAs that read codons beginning with adenine. Is involved in the transfer of the threonylcarbamoyl moiety of threonylcarbamoyl-AMP (TC-AMP) to the N6 group of A37, together with TsaE and TsaB. TsaD likely plays a direct catalytic role in this reaction. The chain is tRNA N6-adenosine threonylcarbamoyltransferase from Streptococcus pyogenes serotype M3 (strain ATCC BAA-595 / MGAS315).